The primary structure comprises 291 residues: uncharacterized protein (291 aa).

The tract at residues T77–P140 is disordered. Over residues P125–P134 the composition is skewed to pro residues.

This is an uncharacterized protein from Synechocystis sp. (strain ATCC 27184 / PCC 6803 / Kazusa).